Here is a 67-residue protein sequence, read N- to C-terminus: Medusin-S1 (67 aa).

The first 22 residues, Met1 to Cys22, serve as a signal peptide directing secretion. Residues Glu23–Arg48 constitute a propeptide that is removed on maturation. The segment at Lys26–Lys47 is disordered. Positions Glu31–Arg40 are enriched in acidic residues. The residue at position 66 (Leu66) is a Leucine amide.

It belongs to the frog skin active peptide (FSAP) family. Medusin subfamily. Expressed by the skin glands.

It is found in the secreted. Its subcellular location is the target cell membrane. Functionally, antibacterial peptide with moderate activity against the Gram-positive bacteria (S.aureus ATCC 25923, MIC=25 uM), but not against all other bacteria (both Gram-positive and Gram-negative) tested. Does not show activity against fungi, and against Leishmania species. It adopts an alpha-helical structure with very low amphipathicity in membrane environments. This Phyllomedusa sauvagei (Sauvage's leaf frog) protein is Medusin-S1.